The sequence spans 555 residues: Phosphomethylpyrimidine synthase (555 aa).

Residues Asn191, Met220, Tyr249, His285, 305–307 (SRG), 346–349 (DGLR), and Glu385 contribute to the substrate site. His389 contributes to the Zn(2+) binding site. Residue Tyr412 coordinates substrate. His453 lines the Zn(2+) pocket. The [4Fe-4S] cluster site is built by Cys533, Cys536, and Cys541.

Belongs to the ThiC family. As to quaternary structure, homodimer. [4Fe-4S] cluster is required as a cofactor.

The catalysed reaction is 5-amino-1-(5-phospho-beta-D-ribosyl)imidazole + S-adenosyl-L-methionine = 4-amino-2-methyl-5-(phosphooxymethyl)pyrimidine + CO + 5'-deoxyadenosine + formate + L-methionine + 3 H(+). Its pathway is cofactor biosynthesis; thiamine diphosphate biosynthesis. In terms of biological role, catalyzes the synthesis of the hydroxymethylpyrimidine phosphate (HMP-P) moiety of thiamine from aminoimidazole ribotide (AIR) in a radical S-adenosyl-L-methionine (SAM)-dependent reaction. The polypeptide is Phosphomethylpyrimidine synthase (Ehrlichia ruminantium (strain Gardel)).